Reading from the N-terminus, the 606-residue chain is Pickpocket protein 28 (606 aa).

Positions 1–26 (MRTLTESRRRQSGSSGCKKDSESDDD) are disordered. 2 consecutive transmembrane segments (helical) span residues 66–86 (IFFG…ISNV) and 490–510 (GLLG…FFYI).

Belongs to the amiloride-sensitive sodium channel (TC 1.A.6) family. Expressed in water-sensing neurons in taste bristles on the proboscis but not in carbonation-sensing taste peg neurons (at protein level). Expressed in the tracheal system.

The protein localises to the cell membrane. Functionally, osmosensitive ion channel that mediates the cellular and behavioral response to water. Plays an essential role in gustatory water reception. Part of a complex that plays a role in tracheal liquid clearance. Probable role in sodium transport. This Drosophila melanogaster (Fruit fly) protein is Pickpocket protein 28 (ppk28).